The primary structure comprises 104 residues: Large ribosomal subunit protein bL21 (104 aa).

The protein belongs to the bacterial ribosomal protein bL21 family. In terms of assembly, part of the 50S ribosomal subunit. Contacts protein L20.

Functionally, this protein binds to 23S rRNA in the presence of protein L20. In Moorella thermoacetica (strain ATCC 39073 / JCM 9320), this protein is Large ribosomal subunit protein bL21.